Here is a 280-residue protein sequence, read N- to C-terminus: Four and a half LIM domains protein 1 (280 aa).

An N-acetylserine modification is found at Ser2. The residue at position 4 (Lys4) is an N6-acetyllysine. The C4-type zinc finger occupies 7 to 31 (CHYCRDPLQGKKYVQKDGRHCCLKC). LIM zinc-binding domains are found at residues 40–92 (CVEC…CNKC), 101–153 (CKGC…CVTC), 162–212 (CVKC…CVDC), and 221–276 (CAGC…CPDC). Lys86 participates in a covalent cross-link: Glycyl lysine isopeptide (Lys-Gly) (interchain with G-Cter in SUMO2).

It is found in the cytoplasm. Its function is as follows. May have an involvement in muscle development or hypertrophy. Isoform 2 binds to RBP-J and plays a negative regulatory role in the RBP-J-mediated transcription in mammalian systems. The polypeptide is Four and a half LIM domains protein 1 (Fhl1) (Rattus norvegicus (Rat)).